The primary structure comprises 180 residues: ATP-dependent protease subunit HslV (180 aa).

Thr-6 is an active-site residue. Positions 164, 167, and 170 each coordinate Na(+).

This sequence belongs to the peptidase T1B family. HslV subfamily. In terms of assembly, a double ring-shaped homohexamer of HslV is capped on each side by a ring-shaped HslU homohexamer. The assembly of the HslU/HslV complex is dependent on binding of ATP.

It localises to the cytoplasm. It carries out the reaction ATP-dependent cleavage of peptide bonds with broad specificity.. Its activity is regulated as follows. Allosterically activated by HslU binding. Protease subunit of a proteasome-like degradation complex believed to be a general protein degrading machinery. This is ATP-dependent protease subunit HslV from Borrelia duttonii (strain Ly).